Consider the following 262-residue polypeptide: Ankyrin repeat domain-containing protein 7 (262 aa).

ANK repeat units follow at residues 67–96 (KYRTPLHLACANGHRDVVLFLIEQQCKINI), 100–129 (ENKSPLIKAVQCQNEDCATILLNCGADPNL), 133–162 (RYNTALHYAVCGQSFSLVEQLLDYEADLEA), 166–195 (DGYTPLLVAVINNNPKMVKFLLEKGADVNA), and 199–228 (YQRTALILAVSGEPTRLVKLLLQQGVELSC).

The chain is Ankyrin repeat domain-containing protein 7 (ANKRD7) from Macaca fascicularis (Crab-eating macaque).